Consider the following 172-residue polypeptide: MTTLSNLSVDLVGEIFSRVPLISLSEVRCTCTTWNTLSWNILSENYVFGKADTSKQFLGFVVMNSKVCSLRLDLQGIHNNDFVDPSLKEINIVDQYDISNIFHCDGLLLCVRWIQPRSKYHKFHRLDMYAFGYDKQQQEPDEETVTLSCIRDEQLAVLYQPYDLCLDLFMEI.

Residues 1-51 enclose the F-box domain; sequence MTTLSNLSVDLVGEIFSRVPLISLSEVRCTCTTWNTLSWNILSENYVFGKA.

The sequence is that of Putative F-box protein At3g13825 from Arabidopsis thaliana (Mouse-ear cress).